The sequence spans 318 residues: 2,4-dinitroanisole O-demethylase subunit beta (318 aa).

It belongs to the metallo-beta-lactamase superfamily. As to quaternary structure, part of the complex DnhAB composed of the 2,4-dinitroanisole O-demethylase alpha (DnhA) and beta (DnhB) subunits.

It carries out the reaction 2,4-dinitroanisole + H2O = 2,4-dinitrophenol + methanol + H(+). In terms of biological role, involved in the degradation of 2,4-dinitroanisole (DNAN), an insensitive munition ingredient used in explosive formulations as a replacement for 2,4,6-trinitrotoluene (TNT). Catalyzes the removal of the methyl group from 2,4-dinitroanisole (DNAN) to yield 2,4-dinitrophenol (2,4-DNP) and methanol. This chain is 2,4-dinitroanisole O-demethylase subunit beta, found in Nocardioides sp. (strain JS1661).